A 302-amino-acid polypeptide reads, in one-letter code: Quinolinate synthase (302 aa).

Residues His-24 and Ser-41 each coordinate iminosuccinate. Position 86 (Cys-86) interacts with [4Fe-4S] cluster. Residues 112 to 114 (YVN) and Ser-129 contribute to the iminosuccinate site. Residue Cys-171 coordinates [4Fe-4S] cluster. Residues 197-199 (HPE) and Thr-214 contribute to the iminosuccinate site. Cys-259 lines the [4Fe-4S] cluster pocket.

This sequence belongs to the quinolinate synthase family. Type 2 subfamily. [4Fe-4S] cluster serves as cofactor.

Its subcellular location is the cytoplasm. The enzyme catalyses iminosuccinate + dihydroxyacetone phosphate = quinolinate + phosphate + 2 H2O + H(+). It functions in the pathway cofactor biosynthesis; NAD(+) biosynthesis; quinolinate from iminoaspartate: step 1/1. Catalyzes the condensation of iminoaspartate with dihydroxyacetone phosphate to form quinolinate. This chain is Quinolinate synthase, found in Dehalococcoides mccartyi (strain CBDB1).